We begin with the raw amino-acid sequence, 241 residues long: ATP synthase subunit a (241 aa).

A run of 5 helical transmembrane segments spans residues 30 to 50, 91 to 111, 128 to 148, 193 to 213, and 214 to 234; these read GQVFMTSWILIGALLTLVVVG, FIGTLFLFIFVSNWGGALIPW, INTTVALALLVSLSYFYAGLS, LVVAVLVFLVPLVLPVPVMFL, and GLFTSAIQALIFATLAAYYIG.

It belongs to the ATPase A chain family. F-type ATPases have 2 components, CF(1) - the catalytic core - and CF(0) - the membrane proton channel. CF(1) has five subunits: alpha(3), beta(3), gamma(1), delta(1), epsilon(1). CF(0) has four main subunits: a, b, b' and c.

The protein resides in the cellular thylakoid membrane. In terms of biological role, key component of the proton channel; it plays a direct role in the translocation of protons across the membrane. This is ATP synthase subunit a from Prochlorococcus marinus (strain SARG / CCMP1375 / SS120).